Consider the following 381-residue polypeptide: Alkanesulfonate monooxygenase (381 aa).

Belongs to the SsuD family. Homotetramer.

It carries out the reaction an alkanesulfonate + FMNH2 + O2 = an aldehyde + FMN + sulfite + H2O + 2 H(+). Functionally, catalyzes the desulfonation of aliphatic sulfonates. The chain is Alkanesulfonate monooxygenase from Escherichia coli O8 (strain IAI1).